The following is a 210-amino-acid chain: ATP phosphoribosyltransferase (210 aa).

It belongs to the ATP phosphoribosyltransferase family. Short subfamily. In terms of assembly, heteromultimer composed of HisG and HisZ subunits.

It localises to the cytoplasm. It carries out the reaction 1-(5-phospho-beta-D-ribosyl)-ATP + diphosphate = 5-phospho-alpha-D-ribose 1-diphosphate + ATP. It functions in the pathway amino-acid biosynthesis; L-histidine biosynthesis; L-histidine from 5-phospho-alpha-D-ribose 1-diphosphate: step 1/9. Its function is as follows. Catalyzes the condensation of ATP and 5-phosphoribose 1-diphosphate to form N'-(5'-phosphoribosyl)-ATP (PR-ATP). Has a crucial role in the pathway because the rate of histidine biosynthesis seems to be controlled primarily by regulation of HisG enzymatic activity. In Petrotoga mobilis (strain DSM 10674 / SJ95), this protein is ATP phosphoribosyltransferase.